The chain runs to 267 residues: 2-keto-3-deoxy-L-rhamnonate aldolase (267 aa).

The active-site Proton acceptor is the His-49. Gln-151 serves as a coordination point for substrate. A Mg(2+)-binding site is contributed by Glu-153. Ala-178 and Asp-179 together coordinate substrate. Asp-179 serves as a coordination point for Mg(2+).

This sequence belongs to the HpcH/HpaI aldolase family. KDR aldolase subfamily. Homohexamer. The cofactor is Mg(2+).

It catalyses the reaction 2-dehydro-3-deoxy-L-rhamnonate = (S)-lactaldehyde + pyruvate. Catalyzes the reversible retro-aldol cleavage of 2-keto-3-deoxy-L-rhamnonate (KDR) to pyruvate and lactaldehyde. This is 2-keto-3-deoxy-L-rhamnonate aldolase from Escherichia coli O6:K15:H31 (strain 536 / UPEC).